The primary structure comprises 854 residues: Rod cGMP-specific 3',5'-cyclic phosphodiesterase subunit beta (854 aa).

N-acetylserine is present on Ser2. GAF domains follow at residues Asn71–Leu220 and Asp252–Val429. In terms of domain architecture, PDEase spans Asp481–Tyr814. The Proton donor role is filled by His557. A divalent metal cation is bound by residues His561, His597, Asp598, and Asp718. Cys851 carries the S-geranylgeranyl cysteine lipid modification. Residues Cys852–Leu854 constitute a propeptide, removed in mature form.

Belongs to the cyclic nucleotide phosphodiesterase family. Oligomer composed of two catalytic chains (alpha and beta), an inhibitory chain (gamma) and the delta chain. A divalent metal cation is required as a cofactor.

The protein resides in the membrane. It localises to the cell projection. Its subcellular location is the cilium. It is found in the photoreceptor outer segment. It carries out the reaction 3',5'-cyclic GMP + H2O = GMP + H(+). In terms of biological role, rod-specific cGMP phosphodiesterase that catalyzes the hydrolysis of 3',5'-cyclic GMP. Necessary for the formation of a functional phosphodiesterase holoenzyme. Involved in retinal circadian rhythm photoentrainment via modulation of UVA and orange light-induced phase-shift of the retina clock. May participate in processes of transmission and amplification of the visual signal. This is Rod cGMP-specific 3',5'-cyclic phosphodiesterase subunit beta from Homo sapiens (Human).